The chain runs to 283 residues: CASP-like protein 4A3 (283 aa).

Positions 1-86 (MRSPAKTMPS…VEETPSPIVV (86 aa)) are disordered. Residues 1-135 (MRSPAKTMPS…SRREEVVKFS (135 aa)) lie on the Cytoplasmic side of the membrane. A compositionally biased stretch (low complexity) spans 9 to 20 (PSMSPSSVSTEK). The span at 50-79 (SLDHSSESEKEDAKSKPESRRNKNPGKVEE) shows a compositional bias: basic and acidic residues. The chain crosses the membrane as a helical span at residues 136–156 (ALGFRLSEVVLALISFSIMAA). The Extracellular segment spans residues 157–174 (DKTKGWSGDSFDRYKEYR). The helical transmembrane segment at 175–195 (FCLSVNVVAFVYSSFQACDLA) threads the bilayer. The Cytoplasmic portion of the chain corresponds to 196–212 (YHLVKEKHLISHHLRPL). A helical transmembrane segment spans residues 213 to 233 (FEFIIDQVLAYLLMSASTAAV). Residues 234–251 (TRVDDWVSNWGKDEFTEM) are Extracellular-facing. A helical membrane pass occupies residues 252–272 (ASASIAMSFLAFLAFAFSSLI). The Cytoplasmic portion of the chain corresponds to 273-283 (SGYNLFNQGSL).

Belongs to the Casparian strip membrane proteins (CASP) family. As to quaternary structure, homodimer and heterodimers.

It localises to the cell membrane. The sequence is that of CASP-like protein 4A3 from Arabidopsis thaliana (Mouse-ear cress).